Reading from the N-terminus, the 361-residue chain is Mannose-1-phosphate guanyltransferase (361 aa).

Thr-153 is modified (phosphothreonine). A Glycyl lysine isopeptide (Lys-Gly) (interchain with G-Cter in ubiquitin) cross-link involves residue Lys-244.

The protein belongs to the transferase hexapeptide repeat family.

It is found in the cytoplasm. It carries out the reaction alpha-D-mannose 1-phosphate + GTP + H(+) = GDP-alpha-D-mannose + diphosphate. It participates in nucleotide-sugar biosynthesis; GDP-alpha-D-mannose biosynthesis; GDP-alpha-D-mannose from alpha-D-mannose 1-phosphate (GTP route): step 1/1. Its function is as follows. Involved in cell wall synthesis where it is required for glycosylation. Involved in cell cycle progression through cell-size checkpoint. This Saccharomyces cerevisiae (strain ATCC 204508 / S288c) (Baker's yeast) protein is Mannose-1-phosphate guanyltransferase (PSA1).